The sequence spans 910 residues: Putative disease resistance protein At1g58400 (910 aa).

Residues 15–57 (DRLTQEYEQFQGVEDRIAELKSNLNLLKSFLKDAEAKKNTSQM) are a coiled coil. Residues 148 to 460 (REREMRQTFS…AEGILEPRHY (313 aa)) enclose the NB-ARC domain. Residue 191-198 (GMGGLGKT) participates in ATP binding. 2 LRR repeats span residues 580–604 (LELL…GIGK) and 605–628 (LIHL…LGNL).

It belongs to the disease resistance NB-LRR family.

Potential disease resistance protein. The sequence is that of Putative disease resistance protein At1g58400 from Arabidopsis thaliana (Mouse-ear cress).